We begin with the raw amino-acid sequence, 20 residues long: Hemocyanin subunit Ib (20 aa).

Residues 1–20 (DSVGSTTAHKQQNINHLLDK) are disordered.

The protein belongs to the tyrosinase family. Hemocyanin subfamily. Composed of 3 major subunits (IB, II and III) and 1 minor subunit (IA) which form homohexamers and heterohexamers. May also form larger structures. In terms of tissue distribution, hemolymph.

It localises to the secreted. Its subcellular location is the extracellular space. Functionally, hemocyanins are copper-containing oxygen carriers occurring freely dissolved in the hemolymph of many mollusks and arthropods. The polypeptide is Hemocyanin subunit Ib (Panulirus japonicus (Japanese spiny lobster)).